The chain runs to 313 residues: Protoheme IX farnesyltransferase (313 aa).

The next 9 helical transmembrane spans lie at Val29 to Pro49, Leu57 to Phe77, Leu101 to Trp123, Val124 to Ile144, Ile157 to Gly177, Tyr185 to Ile205, Met225 to Val245, Phe247 to Trp267, and Ala287 to Ile307.

It belongs to the UbiA prenyltransferase family. Protoheme IX farnesyltransferase subfamily.

It is found in the cell membrane. It catalyses the reaction heme b + (2E,6E)-farnesyl diphosphate + H2O = Fe(II)-heme o + diphosphate. The protein operates within porphyrin-containing compound metabolism; heme O biosynthesis; heme O from protoheme: step 1/1. Its function is as follows. Converts heme B (protoheme IX) to heme O by substitution of the vinyl group on carbon 2 of heme B porphyrin ring with a hydroxyethyl farnesyl side group. This is Protoheme IX farnesyltransferase from Deinococcus radiodurans (strain ATCC 13939 / DSM 20539 / JCM 16871 / CCUG 27074 / LMG 4051 / NBRC 15346 / NCIMB 9279 / VKM B-1422 / R1).